The following is a 179-amino-acid chain: Large ribosomal subunit protein uL5 (179 aa).

The protein belongs to the universal ribosomal protein uL5 family. As to quaternary structure, part of the 50S ribosomal subunit; part of the 5S rRNA/L5/L18/L25 subcomplex. Contacts the 5S rRNA and the P site tRNA. Forms a bridge to the 30S subunit in the 70S ribosome.

Its function is as follows. This is one of the proteins that bind and probably mediate the attachment of the 5S RNA into the large ribosomal subunit, where it forms part of the central protuberance. In the 70S ribosome it contacts protein S13 of the 30S subunit (bridge B1b), connecting the 2 subunits; this bridge is implicated in subunit movement. Contacts the P site tRNA; the 5S rRNA and some of its associated proteins might help stabilize positioning of ribosome-bound tRNAs. This Buchnera aphidicola subsp. Acyrthosiphon pisum (strain APS) (Acyrthosiphon pisum symbiotic bacterium) protein is Large ribosomal subunit protein uL5.